We begin with the raw amino-acid sequence, 954 residues long: Glycine dehydrogenase (decarboxylating) (954 aa).

N6-(pyridoxal phosphate)lysine is present on Lys-702.

It belongs to the GcvP family. The glycine cleavage system is composed of four proteins: P, T, L and H. Pyridoxal 5'-phosphate is required as a cofactor.

The catalysed reaction is N(6)-[(R)-lipoyl]-L-lysyl-[glycine-cleavage complex H protein] + glycine + H(+) = N(6)-[(R)-S(8)-aminomethyldihydrolipoyl]-L-lysyl-[glycine-cleavage complex H protein] + CO2. Its function is as follows. The glycine cleavage system catalyzes the degradation of glycine. The P protein binds the alpha-amino group of glycine through its pyridoxal phosphate cofactor; CO(2) is released and the remaining methylamine moiety is then transferred to the lipoamide cofactor of the H protein. The sequence is that of Glycine dehydrogenase (decarboxylating) from Xanthomonas euvesicatoria pv. vesicatoria (strain 85-10) (Xanthomonas campestris pv. vesicatoria).